The sequence spans 89 residues: DNA/RNA-binding protein Alba (89 aa).

This sequence belongs to the histone-like Alba family.

The protein localises to the cytoplasm. The protein resides in the chromosome. In terms of biological role, binds double-stranded DNA tightly but without sequence specificity. Involved in DNA compaction. The protein is DNA/RNA-binding protein Alba of Methanothrix thermoacetophila (strain DSM 6194 / JCM 14653 / NBRC 101360 / PT) (Methanosaeta thermophila).